We begin with the raw amino-acid sequence, 367 residues long: 3-dehydroquinate synthase (367 aa).

Residues 112–116, 136–137, K149, K158, and 176–179 each bind NAD(+); these read GVIGD, TT, and TLKT. Zn(2+)-binding residues include E191, H256, and H273.

The protein belongs to the sugar phosphate cyclases superfamily. Dehydroquinate synthase family. NAD(+) is required as a cofactor. It depends on Co(2+) as a cofactor. The cofactor is Zn(2+).

The protein resides in the cytoplasm. The catalysed reaction is 7-phospho-2-dehydro-3-deoxy-D-arabino-heptonate = 3-dehydroquinate + phosphate. Its pathway is metabolic intermediate biosynthesis; chorismate biosynthesis; chorismate from D-erythrose 4-phosphate and phosphoenolpyruvate: step 2/7. In terms of biological role, catalyzes the conversion of 3-deoxy-D-arabino-heptulosonate 7-phosphate (DAHP) to dehydroquinate (DHQ). The chain is 3-dehydroquinate synthase from Prochlorococcus marinus (strain SARG / CCMP1375 / SS120).